Consider the following 380-residue polypeptide: Alcohol dehydrogenase 2 (380 aa).

Zn(2+) is bound by residues Cys48, Thr50, His70, Cys100, Cys103, Cys106, Cys114, and Cys178. An alcohol-binding residues include Thr50 and His70. Thr50 lines the NAD(+) pocket. NAD(+)-binding positions include 203 to 208 (GLGAVG), Asp227, Arg232, Thr273, Val296, 296 to 298 (VGV), Phe323, and Arg373.

Belongs to the zinc-containing alcohol dehydrogenase family. Homodimer. Homotetramer. The cofactor is Zn(2+).

It localises to the cytoplasm. It carries out the reaction a primary alcohol + NAD(+) = an aldehyde + NADH + H(+). The catalysed reaction is a secondary alcohol + NAD(+) = a ketone + NADH + H(+). The chain is Alcohol dehydrogenase 2 (ADH2) from Solanum lycopersicum (Tomato).